The chain runs to 189 residues: Peptidyl-tRNA hydrolase (189 aa).

Tyr14 is a tRNA binding site. His19 acts as the Proton acceptor in catalysis. TRNA is bound by residues Tyr64, Asn66, and Asn112.

It belongs to the PTH family. As to quaternary structure, monomer.

It localises to the cytoplasm. It catalyses the reaction an N-acyl-L-alpha-aminoacyl-tRNA + H2O = an N-acyl-L-amino acid + a tRNA + H(+). Hydrolyzes ribosome-free peptidyl-tRNAs (with 1 or more amino acids incorporated), which drop off the ribosome during protein synthesis, or as a result of ribosome stalling. In terms of biological role, catalyzes the release of premature peptidyl moieties from peptidyl-tRNA molecules trapped in stalled 50S ribosomal subunits, and thus maintains levels of free tRNAs and 50S ribosomes. The polypeptide is Peptidyl-tRNA hydrolase (Dehalococcoides mccartyi (strain CBDB1)).